The following is a 129-amino-acid chain: NADH-quinone oxidoreductase subunit A (129 aa).

3 helical membrane-spanning segments follow: residues 14–34 (LAIH…VAAW), 67–87 (FLIA…FAWA), and 95–115 (WLGL…LVYL).

It belongs to the complex I subunit 3 family. As to quaternary structure, NDH-1 is composed of 14 different subunits. Subunits NuoA, H, J, K, L, M, N constitute the membrane sector of the complex.

Its subcellular location is the cell inner membrane. The enzyme catalyses a quinone + NADH + 5 H(+)(in) = a quinol + NAD(+) + 4 H(+)(out). Its function is as follows. NDH-1 shuttles electrons from NADH, via FMN and iron-sulfur (Fe-S) centers, to quinones in the respiratory chain. The immediate electron acceptor for the enzyme in this species is believed to be ubiquinone. Couples the redox reaction to proton translocation (for every two electrons transferred, four hydrogen ions are translocated across the cytoplasmic membrane), and thus conserves the redox energy in a proton gradient. The sequence is that of NADH-quinone oxidoreductase subunit A from Rhodopseudomonas palustris (strain ATCC BAA-98 / CGA009).